Consider the following 181-residue polypeptide: Ribosome maturation factor RimP (181 aa).

This sequence belongs to the RimP family.

It localises to the cytoplasm. Its function is as follows. Required for maturation of 30S ribosomal subunits. The sequence is that of Ribosome maturation factor RimP from Sphingopyxis alaskensis (strain DSM 13593 / LMG 18877 / RB2256) (Sphingomonas alaskensis).